Reading from the N-terminus, the 443-residue chain is UDP-N-acetylmuramate--L-alanine ligase (443 aa).

110 to 116 serves as a coordination point for ATP; it reads GAHGKTS.

This sequence belongs to the MurCDEF family.

It is found in the cytoplasm. It carries out the reaction UDP-N-acetyl-alpha-D-muramate + L-alanine + ATP = UDP-N-acetyl-alpha-D-muramoyl-L-alanine + ADP + phosphate + H(+). It functions in the pathway cell wall biogenesis; peptidoglycan biosynthesis. In terms of biological role, cell wall formation. This is UDP-N-acetylmuramate--L-alanine ligase from Streptococcus agalactiae serotype Ia (strain ATCC 27591 / A909 / CDC SS700).